Consider the following 172-residue polypeptide: Ribosome maturation factor RimP (172 aa).

This sequence belongs to the RimP family.

It localises to the cytoplasm. In terms of biological role, required for maturation of 30S ribosomal subunits. The sequence is that of Ribosome maturation factor RimP from Chlorobium phaeovibrioides (strain DSM 265 / 1930) (Prosthecochloris vibrioformis (strain DSM 265)).